A 720-amino-acid chain; its full sequence is Fatty acid CoA ligase Acsl3 (720 aa).

A helical; Signal-anchor for type III membrane protein membrane pass occupies residues 21–41 (ILLYFIHFLISLYTILTYIPF). Over 42-720 (YFFSESRQEK…ADIERMYGRK (679 aa)) the chain is Cytoplasmic. Position 683 is a phosphoserine (Ser683).

The protein belongs to the ATP-dependent AMP-binding enzyme family. The cofactor is Mg(2+).

It is found in the mitochondrion outer membrane. Its subcellular location is the peroxisome membrane. The protein localises to the microsome membrane. The protein resides in the endoplasmic reticulum membrane. The catalysed reaction is a long-chain fatty acid + ATP + CoA = a long-chain fatty acyl-CoA + AMP + diphosphate. It carries out the reaction (5Z,8Z,11Z,14Z)-eicosatetraenoate + ATP + CoA = (5Z,8Z,11Z,14Z)-eicosatetraenoyl-CoA + AMP + diphosphate. It catalyses the reaction (E)-hexadec-2-enoate + ATP + CoA = (2E)-hexadecenoyl-CoA + AMP + diphosphate. The enzyme catalyses 15-hydroxy-(5Z,8Z,11Z,13E)-eicosatetraenoate + ATP + CoA = 15-hydroxy-(5Z,8Z,11Z,13E)-eicosatetraenoyl-CoA + AMP + diphosphate. The catalysed reaction is 12-hydroxy-(5Z,8Z,10E,14Z)-eicosatetraenoate + ATP + CoA = 12-hydroxy-(5Z,8Z,10E,14Z)-eicosatetraenoyl-CoA + AMP + diphosphate. It carries out the reaction 5-hydroxy-(6E,8Z,11Z,14Z)-eicosatetraenoate + ATP + CoA = 5-hydroxy-(6E,8Z,11Z,14Z)-eicosatetraenoyl-CoA + AMP + diphosphate. It catalyses the reaction 14,15-epoxy-(5Z,8Z,11Z)-eicosatrienoate + ATP + CoA = 14,15-epoxy-(5Z,8Z,11Z)-eicosatrienoyl-CoA + AMP + diphosphate. The enzyme catalyses 11,12-epoxy-(5Z,8Z,14Z)-eicosatrienoate + ATP + CoA = 11,12-epoxy-(5Z,8Z,14Z)-eicosatrienoyl-CoA + AMP + diphosphate. The catalysed reaction is a medium-chain fatty acid + ATP + CoA = a medium-chain fatty acyl-CoA + AMP + diphosphate. It carries out the reaction hexadecanoate + ATP + CoA = hexadecanoyl-CoA + AMP + diphosphate. It catalyses the reaction tetradecanoate + ATP + CoA = tetradecanoyl-CoA + AMP + diphosphate. The enzyme catalyses dodecanoate + ATP + CoA = dodecanoyl-CoA + AMP + diphosphate. The catalysed reaction is octadecanoate + ATP + CoA = octadecanoyl-CoA + AMP + diphosphate. It carries out the reaction eicosanoate + ATP + CoA = eicosanoyl-CoA + AMP + diphosphate. It catalyses the reaction (9Z)-octadecenoate + ATP + CoA = (9Z)-octadecenoyl-CoA + AMP + diphosphate. The enzyme catalyses (9Z)-hexadecenoate + ATP + CoA = (9Z)-hexadecenoyl-CoA + AMP + diphosphate. The catalysed reaction is (9Z,12Z)-octadecadienoate + ATP + CoA = (9Z,12Z)-octadecadienoyl-CoA + AMP + diphosphate. It carries out the reaction (9Z,12Z,15Z)-octadecatrienoate + ATP + CoA = (9Z,12Z,15Z)-octadecatrienoyl-CoA + AMP + diphosphate. It catalyses the reaction (4Z,7Z,10Z,13Z,16Z,19Z)-docosahexaenoate + ATP + CoA = (4Z,7Z,10Z,13Z,16Z,19Z)-docosahexaenoyl-CoA + AMP + diphosphate. The enzyme catalyses (5Z,8Z,11Z,14Z,17Z)-eicosapentaenoate + ATP + CoA = (5Z,8Z,11Z,14Z,17Z)-eicosapentaenoyl-CoA + AMP + diphosphate. The catalysed reaction is a fatty acid + ATP + CoA = a fatty acyl-CoA + AMP + diphosphate. Functionally, acyl-CoA synthetases (ACSL) activates long-chain fatty acids for both synthesis of cellular lipids, and degradation via beta-oxidation. Required for the incorporation of fatty acids into phosphatidylcholine, the major phospholipid located on the surface of VLDL (very low density lipoproteins). Has mainly an anabolic role in energy metabolism. Mediates hepatic lipogenesis. Preferentially uses myristate, laurate, arachidonate and eicosapentaenoate as substrates. Both isoforms exhibit the same level of activity. This is Fatty acid CoA ligase Acsl3 from Homo sapiens (Human).